The chain runs to 121 residues: Non-structural protein 8 (121 aa).

Residues 1-15 (MKLLIVFGLLASVYC) form the signal peptide. Residues 19 to 121 (ECSIQECCEN…HDVRVVLDFI (103 aa)) form the SARS ORF8 Ig-like domain. 3 disulfide bridges follow: Cys25–Cys90, Cys37–Cys102, and Cys61–Cys83.

The protein is Non-structural protein 8 of Bat coronavirus HKU3 (BtCoV).